The sequence spans 139 residues: Large ribosomal subunit protein uL16 (139 aa).

The tract at residues 1–23 (MLQPARTKYRKMHKGRMPGSAHR) is disordered. Residues 7-16 (TKYRKMHKGR) are compositionally biased toward basic residues.

Belongs to the universal ribosomal protein uL16 family. In terms of assembly, part of the 50S ribosomal subunit.

Its function is as follows. Binds 23S rRNA and is also seen to make contacts with the A and possibly P site tRNAs. In Myxococcus xanthus (strain DK1622), this protein is Large ribosomal subunit protein uL16.